A 115-amino-acid polypeptide reads, in one-letter code: Phosphoribosyl-AMP cyclohydrolase (115 aa).

D80 is a binding site for Mg(2+). C81 is a Zn(2+) binding site. Mg(2+)-binding residues include D82 and D84. Residues C97 and C104 each coordinate Zn(2+).

The protein belongs to the PRA-CH family. Homodimer. Mg(2+) serves as cofactor. Requires Zn(2+) as cofactor.

The protein localises to the cytoplasm. It catalyses the reaction 1-(5-phospho-beta-D-ribosyl)-5'-AMP + H2O = 1-(5-phospho-beta-D-ribosyl)-5-[(5-phospho-beta-D-ribosylamino)methylideneamino]imidazole-4-carboxamide. The protein operates within amino-acid biosynthesis; L-histidine biosynthesis; L-histidine from 5-phospho-alpha-D-ribose 1-diphosphate: step 3/9. Its function is as follows. Catalyzes the hydrolysis of the adenine ring of phosphoribosyl-AMP. The polypeptide is Phosphoribosyl-AMP cyclohydrolase (Nocardia farcinica (strain IFM 10152)).